A 186-amino-acid polypeptide reads, in one-letter code: CRS2-like protein, chloroplastic (186 aa).

A chloroplast-targeting transit peptide spans 1-49; that stretch reads MAMTAASVFGSGGCLELLTSSKAMRGKLWTRLAPFISKRHASTSQTSLS. Tyrosine 73 is a tRNA binding site. Histidine 78 (proton acceptor) is an active-site residue. The tRNA site is built by tyrosine 123, asparagine 125, and asparagine 171.

The protein belongs to the PTH family.

It is found in the plastid. The protein resides in the chloroplast. This chain is CRS2-like protein, chloroplastic, found in Oryza sativa subsp. japonica (Rice).